A 463-amino-acid chain; its full sequence is NADH dehydrogenase [ubiquinone] iron-sulfur protein 2, mitochondrial (463 aa).

The N-terminal 33 residues, 1–33, are a transit peptide targeting the mitochondrion; that stretch reads MAALRVLCGLRGVAAQVLRPGAGVRLPIQPSRG. K62 carries the N6-acetyllysine modification. A Symmetric dimethylarginine modification is found at R118. [4Fe-4S] cluster-binding residues include C326, C332, and C347.

The protein belongs to the complex I 49 kDa subunit family. As to quaternary structure, core subunit of respiratory chain NADH dehydrogenase (Complex I) which is composed of 45 different subunits. Component of the iron-sulfur (IP) fragment of the enzyme. Interacts with NDUFAF3. Interacts with NDUFAF7. Interacts with CERS2. [4Fe-4S] cluster serves as cofactor. In terms of processing, dimethylation at Arg-118 by NDUFAF7 takes place after NDUFS2 assembles into the complex I, leading to stabilize the early intermediate complex.

It is found in the mitochondrion inner membrane. It carries out the reaction a ubiquinone + NADH + 5 H(+)(in) = a ubiquinol + NAD(+) + 4 H(+)(out). Its function is as follows. Core subunit of the mitochondrial membrane respiratory chain NADH dehydrogenase (Complex I) which catalyzes electron transfer from NADH through the respiratory chain, using ubiquinone as an electron acceptor. Essential for the catalytic activity and assembly of complex I. Redox-sensitive, critical component of the oxygen-sensing pathway in the pulmonary vasculature which plays a key role in acute pulmonary oxygen-sensing and hypoxic pulmonary vasoconstriction. Plays an important role in carotid body sensing of hypoxia. Essential for glia-like neural stem and progenitor cell proliferation, differentiation and subsequent oligodendrocyte or neuronal maturation. The sequence is that of NADH dehydrogenase [ubiquinone] iron-sulfur protein 2, mitochondrial (NDUFS2) from Gorilla gorilla gorilla (Western lowland gorilla).